A 480-amino-acid chain; its full sequence is Type II methyltransferase M.NspV (480 aa).

It belongs to the methyltransferase superfamily.

Functionally, a gamma subtype methylase that recognizes the double-stranded sequence 5'-TTCGAA-3', and methylates it on an unknown base to protect it against the NspV endonuclease. This Nostoc sp. (strain ATCC 29411 / PCC 7524) protein is Type II methyltransferase M.NspV.